Reading from the N-terminus, the 453-residue chain is tRNA hydroxylation protein P (453 aa).

The protein belongs to the peptidase U32 family.

Its function is as follows. Involved in prephenate-dependent formation of 5-hydroxyuridine (ho5U) modification at position 34 in tRNAs, the first step in 5-carboxymethoxyuridine (cmo5U) biosynthesis. Involved differently in ho5U formation in each tRNA; tRNA(Leu3) and tRNA(Pro3) are major targets of TrhP. The chain is tRNA hydroxylation protein P from Escherichia coli (strain K12).